A 463-amino-acid chain; its full sequence is Cysteine--tRNA ligase (463 aa).

Cys-29 is a Zn(2+) binding site. Residues 31–41 (ATPQTQPHIGH) carry the 'HIGH' region motif. The Zn(2+) site is built by Cys-212, His-237, and Glu-241. Residues 268–272 (KMSKS) carry the 'KMSKS' region motif. Residue Lys-271 coordinates ATP.

The protein belongs to the class-I aminoacyl-tRNA synthetase family. As to quaternary structure, monomer. It depends on Zn(2+) as a cofactor.

Its subcellular location is the cytoplasm. It carries out the reaction tRNA(Cys) + L-cysteine + ATP = L-cysteinyl-tRNA(Cys) + AMP + diphosphate. This is Cysteine--tRNA ligase from Corynebacterium diphtheriae (strain ATCC 700971 / NCTC 13129 / Biotype gravis).